The primary structure comprises 1014 residues: Klotho (1014 aa).

The first 34 residues, 1 to 34, serve as a signal peptide directing secretion; sequence MPARAPPRRLPRLLLLRLLSLHLLLLTLRARCLS. Over 35-983 the chain is Extracellular; it reads AEPGQGAQTW…GCGFFQTRKS (949 aa). Glycosyl hydrolase-1 stretches follow at residues 59 to 508 and 517 to 955; these read LHDT…NNGF and LEGT…NNGF. N-linked (GlcNAc...) asparagine glycans are attached at residues Asn-161, Asn-285, Asn-346, Asn-609, Asn-614, and Asn-696. A helical transmembrane segment spans residues 984 to 1004; sequence LLAFISFLVFAFVTSLALIYY. The Cytoplasmic segment spans residues 1005–1014; sequence YSKKGRRRYK.

It belongs to the glycosyl hydrolase 1 family. Klotho subfamily. In terms of assembly, homodimer. Interacts with FGF23 and FGFR1. In terms of processing, N-glycosylated. As to expression, present in cortical renal tubules and the parathyroid (at protein level). Strongly expressed in kidney. Expressed at low levels in brain, lung, intestine and ovaries.

Its subcellular location is the cell membrane. The protein resides in the apical cell membrane. It is found in the secreted. It carries out the reaction a beta-D-glucuronoside + H2O = D-glucuronate + an alcohol. In terms of biological role, may have weak glycosidase activity towards glucuronylated steroids. However, it lacks essential active site Glu residues at positions 241 and 874, suggesting it may be inactive as a glycosidase in vivo. May be involved in the regulation of calcium and phosphorus homeostasis by inhibiting the synthesis of active vitamin D. Essential factor for the specific interaction between FGF23 and FGFR1. The Klotho peptide generated by cleavage of the membrane-bound isoform may be an anti-aging circulating hormone which would extend life span by inhibiting insulin/IGF1 signaling. This Rattus norvegicus (Rat) protein is Klotho (Kl).